The chain runs to 72 residues: Translation initiation factor IF-1 (72 aa).

The S1-like domain occupies 1 to 72; sequence MSKDDCIEFE…TKGRIIYRMK (72 aa).

The protein belongs to the IF-1 family. In terms of assembly, component of the 30S ribosomal translation pre-initiation complex which assembles on the 30S ribosome in the order IF-2 and IF-3, IF-1 and N-formylmethionyl-tRNA(fMet); mRNA recruitment can occur at any time during PIC assembly.

It is found in the cytoplasm. Functionally, one of the essential components for the initiation of protein synthesis. Stabilizes the binding of IF-2 and IF-3 on the 30S subunit to which N-formylmethionyl-tRNA(fMet) subsequently binds. Helps modulate mRNA selection, yielding the 30S pre-initiation complex (PIC). Upon addition of the 50S ribosomal subunit IF-1, IF-2 and IF-3 are released leaving the mature 70S translation initiation complex. The chain is Translation initiation factor IF-1 from Xylella fastidiosa (strain Temecula1 / ATCC 700964).